We begin with the raw amino-acid sequence, 42 residues long: Osteocalcin (42 aa).

The Gla domain maps to 1-40; sequence YLDHGLGAPAPYVDPLEPKREVDELADQMGFQEAYRRFYG. Pro-9 carries the post-translational modification 4-hydroxyproline. Positions 17, 21, and 23 each coordinate Ca(2+). A 4-carboxyglutamate mark is found at Glu-17 and Glu-21.

This sequence belongs to the osteocalcin/matrix Gla protein family. Post-translationally, gamma-carboxyglutamic acid residues are formed by vitamin K dependent carboxylation. These residues are essential for the binding of calcium.

The protein localises to the secreted. Its function is as follows. The carboxylated form is one of the main organic components of the bone matrix, which constitutes 1-2% of the total bone protein: it acts as a negative regulator of bone formation and is required to limit bone formation without impairing bone resorption or mineralization. The carboxylated form binds strongly to apatite and calcium. Functionally, the uncarboxylated form acts as a hormone secreted by osteoblasts, which regulates different cellular processes, such as energy metabolism, male fertility and brain development. Regulates of energy metabolism by acting as a hormone favoring pancreatic beta-cell proliferation, insulin secretion and sensitivity and energy expenditure. Uncarboxylated osteocalcin hormone also promotes testosterone production in the testes: acts as a ligand for G protein-coupled receptor GPRC6A at the surface of Leydig cells, initiating a signaling response that promotes the expression of enzymes required for testosterone synthesis in a CREB-dependent manner. Also acts as a regulator of brain development: osteocalcin hormone crosses the blood-brain barrier and acts as a ligand for GPR158 on neurons, initiating a signaling response that prevents neuronal apoptosis in the hippocampus, favors the synthesis of all monoamine neurotransmitters and inhibits that of gamma-aminobutyric acid (GABA). Osteocalcin also crosses the placenta during pregnancy and maternal osteocalcin is required for fetal brain development. This chain is Osteocalcin, found in Camelops hesternus (Western camel).